We begin with the raw amino-acid sequence, 170 residues long: UPF0201 protein MJ1564 (170 aa).

Acidic residues predominate over residues 133–148 (NEDELEEEEEKEDSEE). The interval 133–170 (NEDELEEEEEKEDSEEIKEGHKEENNLKIKVIDNSSGD) is disordered. The segment covering 149–163 (IKEGHKEENNLKIKV) has biased composition (basic and acidic residues).

The protein belongs to the UPF0201 family.

This is UPF0201 protein MJ1564 from Methanocaldococcus jannaschii (strain ATCC 43067 / DSM 2661 / JAL-1 / JCM 10045 / NBRC 100440) (Methanococcus jannaschii).